The chain runs to 241 residues: Small ribosomal subunit protein uS10m (241 aa).

The transit peptide at 1 to 54 (MIAGVLRRSSLPSRQTLSAALASFNSCISHNLTPATTGASVSSRFTLASSPNSF) directs the protein to the mitochondrion.

Belongs to the universal ribosomal protein uS10 family. In terms of assembly, component of the mitochondrial ribosome small subunit.

It localises to the mitochondrion. The sequence is that of Small ribosomal subunit protein uS10m (RPS10) from Arabidopsis thaliana (Mouse-ear cress).